Consider the following 66-residue polypeptide: Large ribosomal subunit protein uL30 (66 aa).

It belongs to the universal ribosomal protein uL30 family. Part of the 50S ribosomal subunit.

In Chelativorans sp. (strain BNC1), this protein is Large ribosomal subunit protein uL30.